The sequence spans 874 residues: Pentatricopeptide repeat-containing protein At2g17140 (874 aa).

19 PPR repeats span residues 111-145 (SVYL…GIAP), 146-180 (QTYT…GCKP), 181-215 (NEFT…GVLP), 216-250 (NKVI…GLVP), 251-285 (DIVT…EYLG), 290-320 (NSIT…IREN), 325-359 (SLQS…GIGP), 360-394 (SIYS…GVCP), 395-429 (DAVT…NCLP), 430-464 (NAYT…GYGL), 465-499 (DTVT…GSAA), 523-557 (DLIT…KLQP), 558-592 (DSVA…GCHK), 593-627 (SLET…GISP), 628-662 (NICT…NIAP), 663-693 (NVFS…AVSI), 697-731 (KEGL…GFEL), 732-766 (GTFL…GYGF), and 767-797 (DPAA…MMEM).

It belongs to the PPR family. P subfamily.

The polypeptide is Pentatricopeptide repeat-containing protein At2g17140 (Arabidopsis thaliana (Mouse-ear cress)).